Reading from the N-terminus, the 293-residue chain is MSEGIDALSLKEEDVVKFLAAGVHLGSTNVGSSCQGYVFKRKSDGIHIINLRKTWEKLILAARIIASIENPADVCVISSRPYGTRAVLKFAQSTGAIPIAGRFTPGTFTNQIQKRFREPRLLISTDPQHDNQALTEASYVNIPVIALCNTDSPLRFVDCAIPCNNRGIQSIGTMWWILAREVLHLRGIISRKTPWNVMPDLFFYRDPEDIEKEEQAAAIASAKPDEPYQPDFSGNVDQSAAGADWGDQPVVTGADWTAEPSVSKDWAAEPAGWEADTTAVSGDWATPKTEDWA.

A disordered region spans residues 219–293; that stretch reads IASAKPDEPY…WATPKTEDWA (75 aa).

The protein belongs to the universal ribosomal protein uS2 family. In terms of assembly, component of the small ribosomal subunit. Mature ribosomes consist of a small (40S) and a large (60S) subunit. The 40S subunit contains about 33 different proteins and 1 molecule of RNA (18S). The 60S subunit contains about 49 different proteins and 3 molecules of RNA (28S, 5.8S and 5S). Interacts with ribosomal protein S21.

Its subcellular location is the cytoplasm. In terms of biological role, required for the assembly and/or stability of the 40S ribosomal subunit. Required for the processing of the 20S rRNA-precursor to mature 18S rRNA in a late step of the maturation of 40S ribosomal subunits. This chain is Small ribosomal subunit protein uS2, found in Hydra viridissima (Green hydra).